Reading from the N-terminus, the 138-residue chain is Small ribosomal subunit protein uS11c (138 aa).

Positions 1-21 are disordered; the sequence is MAKSISKIGSRKNARIGSRKQ. Positions 9–21 are enriched in basic residues; that stretch reads GSRKNARIGSRKQ.

Belongs to the universal ribosomal protein uS11 family. Part of the 30S ribosomal subunit.

The protein resides in the plastid. It localises to the chloroplast. The chain is Small ribosomal subunit protein uS11c from Cicer arietinum (Chickpea).